Reading from the N-terminus, the 329-residue chain is NADH-quinone oxidoreductase subunit H 1 (329 aa).

A run of 8 helical transmembrane segments spans residues Leu12–Ala32, Trp78–Ile98, Val120–Gly140, Leu159–Ser179, Gly191–Ala211, Leu242–Phe262, Trp270–Trp290, and Trp308–Leu328.

The protein belongs to the complex I subunit 1 family. In terms of assembly, NDH-1 is composed of 14 different subunits. Subunits NuoA, H, J, K, L, M, N constitute the membrane sector of the complex.

The protein resides in the cell inner membrane. It carries out the reaction a quinone + NADH + 5 H(+)(in) = a quinol + NAD(+) + 4 H(+)(out). NDH-1 shuttles electrons from NADH, via FMN and iron-sulfur (Fe-S) centers, to quinones in the respiratory chain. The immediate electron acceptor for the enzyme in this species is believed to be ubiquinone. Couples the redox reaction to proton translocation (for every two electrons transferred, four hydrogen ions are translocated across the cytoplasmic membrane), and thus conserves the redox energy in a proton gradient. This subunit may bind ubiquinone. This Geobacter metallireducens (strain ATCC 53774 / DSM 7210 / GS-15) protein is NADH-quinone oxidoreductase subunit H 1.